The primary structure comprises 375 residues: Actin-binding Rho-activating protein (375 aa).

Basic and acidic residues-rich tracts occupy residues 1 to 11 and 79 to 99; these read MAPGEREREAG and KPDR…SHIK. Disordered stretches follow at residues 1–20 and 38–99; these read MAPG…LRKV and NENS…SHIK. Residues serine 150 and serine 182 each carry the phosphoserine modification. A compositionally biased stretch (basic and acidic residues) spans 173–182; it reads QEEPTWKSDS. Positions 173-204 are disordered; sequence QEEPTWKSDSVDTEDSGYGGDMEERPEQDAAP. Actin-binding regions lie at residues 193-293 and 294-375; these read DMEE…AERA and KRAE…TLLE. Interaction with actin stretches follow at residues 234–279 and 346–375; these read SQVD…GDEG and MRAR…TLLE.

Binds F-actin and ABLIM1, ABLIM2 and ABLIM3. Interaction with ABLIM2 and ABLIM3 enhances activity. As to expression, expressed specifically in heart and skeletal muscle.

It is found in the cytoplasm. It localises to the myofibril. Its subcellular location is the sarcomere. The protein localises to the cytoskeleton. In terms of biological role, acts as an activator of serum response factor (SRF)-dependent transcription possibly by inducing nuclear translocation of MKL1 or MKL2 and through a mechanism requiring Rho-actin signaling. The polypeptide is Actin-binding Rho-activating protein (Mus musculus (Mouse)).